Here is a 599-residue protein sequence, read N- to C-terminus: Aspartate--tRNA(Asp/Asn) ligase (599 aa).

Residue E172 participates in L-aspartate binding. Positions 196–199 (QLFK) are aspartate. Residue R218 coordinates L-aspartate. Residues 218–220 (RDE) and Q227 contribute to the ATP site. H451 is a binding site for L-aspartate. E485 lines the ATP pocket. R492 contributes to the L-aspartate binding site. 537-540 (GLDR) provides a ligand contact to ATP.

Belongs to the class-II aminoacyl-tRNA synthetase family. Type 1 subfamily. As to quaternary structure, homodimer.

It localises to the cytoplasm. It catalyses the reaction tRNA(Asx) + L-aspartate + ATP = L-aspartyl-tRNA(Asx) + AMP + diphosphate. Functionally, aspartyl-tRNA synthetase with relaxed tRNA specificity since it is able to aspartylate not only its cognate tRNA(Asp) but also tRNA(Asn). Reaction proceeds in two steps: L-aspartate is first activated by ATP to form Asp-AMP and then transferred to the acceptor end of tRNA(Asp/Asn). In Aromatoleum aromaticum (strain DSM 19018 / LMG 30748 / EbN1) (Azoarcus sp. (strain EbN1)), this protein is Aspartate--tRNA(Asp/Asn) ligase.